The chain runs to 205 residues: Basonuclin zinc finger protein homolog (205 aa).

2 C2H2-type zinc fingers span residues 107–130 and 135–164; these read VACDICSKSFCDKGALKIHTSAVH and HTCTVTGCGKQFSSRRSRNRHSSNNNPKLH. The segment at 145-168 is disordered; sequence QFSSRRSRNRHSSNNNPKLHMPES.

Expressed in the VA and VB motor neurons and at lower levels in the SABV neuron pair.

The protein resides in the nucleus. Functionally, probable transcription factor. Involved in motor neuron fate determination and maintenance, acting as a transcriptional repressor to counteract gene activation by transcription factor unc-3 in a subset of motor neurons. Required throughout development to repress transcription by unc-3, probably acting by binding to specific promoter elements. Represses expression of DA and DB motor neuron-specific effector genes, such as unc-129 and unc-53, in VA and VB motor neurons. This is Basonuclin zinc finger protein homolog from Caenorhabditis elegans.